The following is a 767-amino-acid chain: MGFINLSLFDVDKLMVWVSKFNPGKILSAICNLGIDCWNRFRKWFFGLNFDAHMWAVDAFIPLMPHYTEQMERVVDDFCSETPESKLEDCLELDTSVNEFFDEEVYKKDEEGVMKLQRSAARKHIKRVRPGMMQAAIKAVETRIRNRHTIFGDDMGKVDEAAVRATASDICGEFKINEHHTNALVYAAAYLAMTPDQRSIDSVKLAYNPKSQARRTLVSAIRENKAVAGFKSLEDFLGGPLSFPVEDAPYPILGIPEIRVAEKRASRVMKSKRVVGLPAVSAGLKVCVHQTSLHNMIVSLERRVFRVKNSAGELVVPPKPIQNAFDSISYFREEWLRKLSHKGQILKSSLADVVACYSSEKRKLYQKAADSLEKKPVQWRDSKVQAFIKVEKLECDTKDPVPRTIQPRSKRYNLAIGQYLRLNEKKMLDSIDDVFKEKTVLSGLDNRAQGRAIAHKWRKYQNPIGIGLDASRFDQHCSVDALKFEQTFYKACFPGDQQLETLLKWQLSNTGSALLPTGELVRYRTKGCRMSGDINTGLGNKILMCSMVHAFLKETGVRASLANNGDDCVLFCEKGDYEQINRNLEQWFLCRGFEMTVEKPVDVLEKVAFCRSQPVCIATQWAMVRQLGSLSRDCFSTQDWLNPKTFKDAMNALGQCNGIINDGVPIHMAQAKLMHRIGGNRKFNLDALHKQMEYSWRDRLGKRTNLLWSEVEDATRLSYFRAFGIEPYIQRIVEEYFSQVEITCEGRSTNVLPTHYSRIHKDLIKAR.

The RdRp catalytic domain maps to 463 to 580 (PIGIGLDASR…FCEKGDYEQI (118 aa)).

It belongs to the tombusviridae RNA polymerase family. In terms of assembly, interacts with protein p27 (via C-terminus). Forms homooligomers. interacts with host NbRACK1; this interaction is required for efficient viral replication. interacts with host NbRBOHB; this interaction triggers an intracellular ROS burst, important for viral replication. Interacts with host ARF1; this interaction is required for the assembly of the viral replicase complex.

Its subcellular location is the host endoplasmic reticulum membrane. It carries out the reaction RNA(n) + a ribonucleoside 5'-triphosphate = RNA(n+1) + diphosphate. In terms of biological role, RNA-dependent RNA polymerase, made of isoforms p88 and p27, plays an essential role in the replication of the bipartite viral genome composed of RNA-1 and RNA-2. Replicase proteins p88 and p27 interact together and selectively recruit viral replication templates as well as other essential components into intracellular membranes for the assembly of the 480 kDa viral replicase complex. Mechanistically, isoform protein p27 binds to the Y-shaped RNA element (YRE) located in the 3' UTR of RNA2 via a direct RNA-protein interaction and to RNA1 in a translation-coupled manner. This RNA-binding activity allows RNA2 recruitment to host membranes. The viral replicase complex synthesizes the dsRNA genome from the genomic ssRNA(+). It recognizes internal subgenomic promoters on the negative-sense RNA to transcribe the 3' co-terminal subgenomic RNAs that will generate the capsid and movement proteins. In addition, the viral replication process requires the trigger of an intracellular ROS burst mediated by p27 recruitment of the host ROS-generating machinery. The viral replicase complex also acts as a suppressor of RNA-mediated gene silencing, known as post-transcriptional gene silencing (PTGS), a mechanism of plant viral defense that limits the accumulation of viral RNAs. This Medicago sativa (Alfalfa) protein is RNA-directed RNA polymerase.